The chain runs to 317 residues: MNINIMLKNKKKKFFSILAILFILMPNNSYASILTVFKPLGFIAAAIAHNVTNVEVIPPNGTTVENYYLLPFDLIKIKHSDFIILIGDQIEPFFFKKAVKYFKKKTIVLTKIKNIKFLLKHKSNFKKGKKKQKNTLQNKKEINNISYDMYLWLSPQIALESAIVIHDMLLKSMPQKKITIDKNLKYFKLCLSKTNKDIKKNVLSIKEKKYFTFHNTYKYFEKFYGLHPSGQFKTYPGIKTGVQYLYKIKNELLKKQAICVFIEPQFHANIIDFIIQGTNIQKENLDLFGTAIPLVQDSYVNFLVKLSNQYISCLKKI.

Residues 1-31 (MNINIMLKNKKKKFFSILAILFILMPNNSYA) form the signal peptide. Cysteine 259 and cysteine 313 are oxidised to a cystine.

It belongs to the bacterial solute-binding protein 9 family.

The protein localises to the periplasm. Part of the ATP-binding cassette (ABC) transport system ZnuABC involved in zinc import. Binds zinc with high affinity and specificity and delivers it to the membrane permease for translocation into the cytoplasm. The chain is High-affinity zinc uptake system protein ZnuA (znuA) from Buchnera aphidicola subsp. Schizaphis graminum (strain Sg).